The primary structure comprises 457 residues: MNQNPVEEGQKFPLTIRRMGINGEGIGYFKKAVVFVPGAITGEEVVVEAVKVRDRFTEAKLNKIRKKSPNRVTAPCPVYEACGGCQLQHVAYNAQLELKRDIVIQSIEKHTKIDPAKLKIRPTIGMEDPWRYRNKSQFQTRMVGSGQVETGLFGANSHQLVPIEDCIVQQPVTIKVTNFVRDLLEKYGVPIYDEKAGSGIIRTIVVRTGVKTGETQLVFITNSKKLPKKREMLAEIEAALPEVTSIMQNVNQAKSSLIFGDETFLLAGKESIEEKLMELEFDLSARAFFQLNPFQTERLYQEVEKALVLTGSETLVDAYCGVGTIGQAFAGKVKEVRGMDIIPESIEDAKRNAEKNGIDNVYYEVGKAEDVLPKWVKEGFRPDAVIVDPPRSGCDQGLIKSLLQVEAKQLVYVSCNPSTLARDLALLAKKYQIRYMQPVDMFPQTAHVETVTLLQRR.

The TRAM domain maps to 5–63 (PVEEGQKFPLTIRRMGINGEGIGYFKKAVVFVPGAITGEEVVVEAVKVRDRFTEAKLNK). The [4Fe-4S] cluster site is built by C76, C82, C85, and C166. S-adenosyl-L-methionine-binding residues include Q290, Y319, D340, and D388. Catalysis depends on C415, which acts as the Nucleophile.

It belongs to the class I-like SAM-binding methyltransferase superfamily. RNA M5U methyltransferase family.

This is an uncharacterized protein from Listeria innocua serovar 6a (strain ATCC BAA-680 / CLIP 11262).